Reading from the N-terminus, the 73-residue chain is Putative membrane protein insertion efficiency factor (73 aa).

Belongs to the UPF0161 family.

It is found in the cell inner membrane. Functionally, could be involved in insertion of integral membrane proteins into the membrane. The chain is Putative membrane protein insertion efficiency factor from Bacteroides fragilis (strain ATCC 25285 / DSM 2151 / CCUG 4856 / JCM 11019 / LMG 10263 / NCTC 9343 / Onslow / VPI 2553 / EN-2).